Consider the following 208-residue polypeptide: FAS-associated death domain protein (208 aa).

Residues P3 to D81 enclose the DED domain. The 85-residue stretch at L97–Q181 folds into the Death domain. Residue R117 is glycosylated ((Microbial infection) N-beta-linked (GlcNAc) arginine). A disordered region spans residues Q187–S208. S194 is subject to Phosphoserine.

In terms of assembly, can self-associate. Component of the AIM2 PANoptosome complex, a multiprotein complex that drives inflammatory cell death (PANoptosis). Component of the death-induced signaling complex (DISC) composed of cell surface receptor FAS/CD95 or TNFRSF1A, adapter protein FADD and the CASP8 protease; recruitment of CASP8 to the complex is required for processing of CASP8 into the p18 and p10 subunits. Interacts (via death domain) with FAS (via death domain). Interacts directly (via DED domain) with NOL3 (via CARD domain); inhibits death-inducing signaling complex (DISC) assembly by inhibiting the increase in FAS-FADD binding induced by FAS activation. Interacts with CFLAR, PEA15 and MBD4. When phosphorylated, part of a complex containing HIPK3 and FAS. May interact with MAVS/IPS1. Interacts with MOCV v-CFLAR protein and PIDD1. Interacts with RIPK1 and TRADD. Interacts with stimulated TNFRSF10B. Interacts with DDX24. (Microbial infection) Interacts with human papillomavirus 16/HPV16 protein E6. As to quaternary structure, (Microbial infection) Interacts with molluscum contagiosum virus proteins MC159L/v-CFLAR and MC160L. In terms of processing, (Microbial infection) Glycosylated at Arg-117 by enteropathogenic E.coli protein NleB1, C.rodentium protein NleB and S.typhimurium protein Ssek1: arginine GlcNAcylation prevents recruitment of caspase-8 or caspase-10 to the activated Fas (CD95) or TNFR-1 receptors. As to expression, expressed in a wide variety of tissues, except for peripheral blood mononuclear leukocytes.

The protein resides in the cytoplasm. Its function is as follows. Apoptotic adapter molecule that recruits caspases CASP8 or CASP10 to the activated FAS/CD95 or TNFRSF1A/TNFR-1 receptors. The resulting aggregate called the death-inducing signaling complex (DISC) performs CASP8 proteolytic activation. Active CASP8 initiates the subsequent cascade of caspases mediating apoptosis. Involved in interferon-mediated antiviral immune response, playing a role in the positive regulation of interferon signaling. This chain is FAS-associated death domain protein, found in Homo sapiens (Human).